The following is a 632-amino-acid chain: Extracellular metalloproteinase 5 (632 aa).

Residues 1 to 20 (MHGLLLAAGLLSLPLHVLAH) form the signal peptide. Positions 21–244 (PQPGTSLAGR…HNVVDYVSHA (224 aa)) are excised as a propeptide. N-linked (GlcNAc...) asparagine glycosylation occurs at asparagine 284. Histidine 427 is a binding site for Zn(2+). Residue glutamate 428 is part of the active site. Residue histidine 431 participates in Zn(2+) binding. Asparagine 591 and asparagine 620 each carry an N-linked (GlcNAc...) asparagine glycan.

This sequence belongs to the peptidase M36 family. Zn(2+) serves as cofactor.

The protein resides in the secreted. Functionally, secreted metalloproteinase probably acting as a virulence factor. This chain is Extracellular metalloproteinase 5 (MEP5), found in Arthroderma otae (strain ATCC MYA-4605 / CBS 113480) (Microsporum canis).